The sequence spans 2292 residues: Protein Ycf2 (2292 aa).

ATP is bound at residue 1644 to 1651 (GSIGTGRS).

Belongs to the Ycf2 family.

The protein localises to the plastid. It localises to the chloroplast stroma. Its function is as follows. Probable ATPase of unknown function. Its presence in a non-photosynthetic plant (Epifagus virginiana) and experiments in tobacco indicate that it has an essential function which is probably not related to photosynthesis. The chain is Protein Ycf2 from Morus indica (Mulberry).